Reading from the N-terminus, the 233-residue chain is Pre-mRNA-splicing factor syf-2 (233 aa).

A compositionally biased stretch (polar residues) spans 1–16; it reads MSDSEQTSSGTASSGS. Disordered stretches follow at residues 1–80 and 95–119; these read MSDS…EDKG and VTEK…YEDM. The span at 17–80 shows a compositional bias: basic and acidic residues; the sequence is KMKDFNQRFR…QDRKEAEDKG (64 aa). The stretch at 18–77 forms a coiled coil; that stretch reads MKDFNQRFRDLHKMRQKARKENHAQVVEEDRRKKLPKNFEAKKERDQWQVKELQDRKEAE.

It belongs to the SYF2 family. As to quaternary structure, may be part of a spliceosome complex.

The protein localises to the nucleus. Its function is as follows. May be involved in pre-mRNA splicing. The polypeptide is Pre-mRNA-splicing factor syf-2 (Caenorhabditis briggsae).